The chain runs to 473 residues: Bifunctional protein GlmU (473 aa).

The pyrophosphorylase stretch occupies residues 1 to 241; sequence MATQPTPLTA…VGSLVGINDR (241 aa). Residues 13 to 16, Lys27, Gln84, and 89 to 90 contribute to the UDP-N-acetyl-alpha-D-glucosamine site; these read LAAG and GT. A Mg(2+)-binding site is contributed by Asp114. Residues Gly152, Glu167, Asn182, and Asn239 each contribute to the UDP-N-acetyl-alpha-D-glucosamine site. Asn239 contributes to the Mg(2+) binding site. Residues 242 to 262 are linker; that stretch reads AQLAAAEEVLYGRIADRLRKS. The segment at 263-473 is N-acetyltransferase; the sequence is GVTIRTSARI…KARLKDAAKK (211 aa). Positions 343 and 361 each coordinate UDP-N-acetyl-alpha-D-glucosamine. His373 functions as the Proton acceptor in the catalytic mechanism. Tyr376 and Asn387 together coordinate UDP-N-acetyl-alpha-D-glucosamine. Acetyl-CoA-binding positions include Ala390, 396–397, Ser415, Thr433, and Arg450; that span reads NY.

The protein in the N-terminal section; belongs to the N-acetylglucosamine-1-phosphate uridyltransferase family. This sequence in the C-terminal section; belongs to the transferase hexapeptide repeat family. As to quaternary structure, homotrimer. Requires Mg(2+) as cofactor.

It localises to the cytoplasm. The enzyme catalyses alpha-D-glucosamine 1-phosphate + acetyl-CoA = N-acetyl-alpha-D-glucosamine 1-phosphate + CoA + H(+). It carries out the reaction N-acetyl-alpha-D-glucosamine 1-phosphate + UTP + H(+) = UDP-N-acetyl-alpha-D-glucosamine + diphosphate. It functions in the pathway nucleotide-sugar biosynthesis; UDP-N-acetyl-alpha-D-glucosamine biosynthesis; N-acetyl-alpha-D-glucosamine 1-phosphate from alpha-D-glucosamine 6-phosphate (route II): step 2/2. Its pathway is nucleotide-sugar biosynthesis; UDP-N-acetyl-alpha-D-glucosamine biosynthesis; UDP-N-acetyl-alpha-D-glucosamine from N-acetyl-alpha-D-glucosamine 1-phosphate: step 1/1. It participates in bacterial outer membrane biogenesis; LPS lipid A biosynthesis. In terms of biological role, catalyzes the last two sequential reactions in the de novo biosynthetic pathway for UDP-N-acetylglucosamine (UDP-GlcNAc). The C-terminal domain catalyzes the transfer of acetyl group from acetyl coenzyme A to glucosamine-1-phosphate (GlcN-1-P) to produce N-acetylglucosamine-1-phosphate (GlcNAc-1-P), which is converted into UDP-GlcNAc by the transfer of uridine 5-monophosphate (from uridine 5-triphosphate), a reaction catalyzed by the N-terminal domain. The sequence is that of Bifunctional protein GlmU from Sorangium cellulosum (strain So ce56) (Polyangium cellulosum (strain So ce56)).